The primary structure comprises 563 residues: 3-oxosteroid 1-dehydrogenase (563 aa).

7–36 contributes to the FAD binding site; that stretch reads DVVVVGSGAAGMVAALVAAHRGLSTVVVEK.

Belongs to the FAD-dependent oxidoreductase 2 family. 3-oxosteroid dehydrogenase subfamily. It depends on FAD as a cofactor.

It carries out the reaction a 3-oxosteroid + A = a 3-oxo-Delta(1)-steroid + AH2. The enzyme catalyses a 3-oxo-Delta(4)-steroid + A = a 3-oxo-Delta(1,4)-steroid + AH2. It catalyses the reaction 3-oxochol-4-en-22-oyl-CoA + NAD(+) = 3-oxochola-1,4-dien-22-oyl-CoA + NADH + H(+). Its function is as follows. Involved in the degradation of cholesterol. Catalyzes the elimination of the C-1 and C-2 hydrogen atoms of the A-ring from the polycyclic ring structure of 3-ketosteroids. Has a clear preference for 3-ketosteroids with a saturated A-ring, displaying highest activity on 5alpha-AD (5alpha-androstane-3,17-dione) and 5alpha-T (5alpha-testosterone, also known as 17beta-hydroxy-5alpha-androstane-3-one). Is also involved in the formation of 3-keto-1,4-diene-steroid from 3-keto-4-ene-steroid. Catalyzes the conversion of 3-oxo-23,24-bisnorchol-4-en-22-oyl-coenzyme A thioester (4-BNC-CoA) to 3-oxo-23,24-bisnorchola-1,4-dien-22-oyl-coenzyme A thioester (1,4-BNC-CoA). The chain is 3-oxosteroid 1-dehydrogenase (kstD) from Mycobacterium tuberculosis (strain ATCC 25618 / H37Rv).